Reading from the N-terminus, the 165-residue chain is Protein SprT (165 aa).

In terms of domain architecture, SprT-like spans 22–163 (LAQANLKLDR…RCVHCGEPLV (142 aa)). Position 78 (His-78) interacts with Zn(2+). The active site involves Glu-79. His-82 is a Zn(2+) binding site.

This sequence belongs to the SprT family. Zn(2+) is required as a cofactor.

It localises to the cytoplasm. The chain is Protein SprT from Salmonella agona (strain SL483).